The sequence spans 586 residues: Phosphatidylinositol-3-phosphatase SAC1-B (586 aa).

Residues 1–519 (MASTYNSFNL…TPLHEPKDWK (519 aa)) lie on the Cytoplasmic side of the membrane. An SAC domain is found at 121–450 (LNSVLNTDGF…ANACAKQYAG (330 aa)). Residues 451–586 (TGALKTDFTR…PRLVQKEKMD (136 aa)) form an essential for phosphatidylinositol-4-phosphate phosphatase activity region. Residues 520-540 (FLTLPIIMVVAFSMCIICLLM) form a helical membrane-spanning segment. Residues 541 to 547 (AGDTWTE) lie on the Lumenal side of the membrane. The chain crosses the membrane as a helical span at residues 548–568 (TLAYVLFWGSASVVTGGVILF). Over 569-586 (NGRDFVDAPRLVQKEKMD) the chain is Cytoplasmic.

It is found in the endoplasmic reticulum membrane. It localises to the golgi apparatus membrane. The enzyme catalyses a 1,2-diacyl-sn-glycero-3-phospho-(1D-myo-inositol-3-phosphate) + H2O = a 1,2-diacyl-sn-glycero-3-phospho-(1D-myo-inositol) + phosphate. The catalysed reaction is a 1,2-diacyl-sn-glycero-3-phospho-(1D-myo-inositol 4-phosphate) + H2O = a 1,2-diacyl-sn-glycero-3-phospho-(1D-myo-inositol) + phosphate. Phosphoinositide phosphatase which catalyzes the hydrolysis of phosphatidylinositol 4-phosphate (PtdIns(4)P), phosphatidylinositol 3-phosphate (PtdIns(3)P) and has low activity towards phosphatidylinositol-3,5-bisphosphate (PtdIns(3,5)P2). This chain is Phosphatidylinositol-3-phosphatase SAC1-B (sacm1lb), found in Danio rerio (Zebrafish).